The primary structure comprises 313 residues: Intelectin-1 (313 aa).

The first 18 residues, 1 to 18 (MNQLSFLLFLIATTRGWS), serve as a signal peptide directing secretion. The Fibrinogen C-terminal domain occupies 32-255 (SSSPSLPRSC…AANALCAGMR (224 aa)). A disulfide bridge links C41 with C70. Residues H86, E87, D89, G92, G97, D98, and D133 each coordinate Ca(2+). Cystine bridges form between C94–C280, C199–C259, and C251–C265. N163 carries N-linked (GlcNAc...) asparagine glycosylation. Residues N260, E262, E274, and D282 each contribute to the Ca(2+) site. A carbohydrate-binding positions include 262-263 (EH) and E274. S298 is lipidated: GPI-anchor amidated serine. The propeptide occupies 299–313 (SSREITEAAVLLFYR).

As to quaternary structure, homotrimer; disulfide-linked. May interact with LTF. N-glycosylated. Highly expressed in omental adipose tissue where it is found in stromal vascular cells but not in fat cells but is barely detectable in subcutaneous adipose tissue (at protein level). Highly expressed in the small intestine. Also found in the heart, testis, colon, salivary gland, skeletal muscle, pancreas and thyroid and, to a lesser degree, in the uterus, spleen, prostate, lymph node and thymus.

The protein localises to the cell membrane. It is found in the secreted. Lectin that specifically recognizes microbial carbohydrate chains in a calcium-dependent manner. Binds to microbial glycans that contain a terminal acyclic 1,2-diol moiety, including beta-linked D-galactofuranose (beta-Galf), D-phosphoglycerol-modified glycans, D-glycero-D-talo-oct-2-ulosonic acid (KO) and 3-deoxy-D-manno-oct-2-ulosonic acid (KDO). Binds to glycans from Gram-positive and Gram-negative bacteria, including K.pneumoniae, S.pneumoniae, Y.pestis, P.mirabilis and P.vulgaris. Does not bind human glycans. Probably plays a role in the defense system against microorganisms. May function as adipokine that has no effect on basal glucose uptake but enhances insulin-stimulated glucose uptake in adipocytes. Increases AKT phosphorylation in the absence and presence of insulin. May interact with lactoferrin/LTF and increase its uptake, and may thereby play a role in iron absorption. This Homo sapiens (Human) protein is Intelectin-1 (ITLN1).